Reading from the N-terminus, the 36-residue chain is Cytochrome b6-f complex subunit 7 (36 aa).

The Lumenal segment spans residues 1–5 (NAAAE). Residues 6–28 (IFRIAAVMNGLTLVGVAIGFVLL) form a helical membrane-spanning segment. Topologically, residues 29-36 (RIEATVEE) are stromal.

This sequence belongs to the PetM family. In terms of assembly, the 4 large subunits of the cytochrome b6-f complex are cytochrome b6, subunit IV (17 kDa polypeptide, PetD), cytochrome f and the Rieske protein, while the 4 small subunits are PetG, PetL, PetM and PetN. The complex functions as a dimer.

Its subcellular location is the plastid. The protein resides in the chloroplast thylakoid membrane. Component of the cytochrome b6-f complex, which mediates electron transfer between photosystem II (PSII) and photosystem I (PSI), cyclic electron flow around PSI, and state transitions. The protein is Cytochrome b6-f complex subunit 7 of Spinacia oleracea (Spinach).